Consider the following 393-residue polypeptide: Fructose-bisphosphate aldolase 4, cytosolic (393 aa).

Arg73 lines the substrate pocket. S-glutathionyl cysteine; transient; alternate is present on Cys207. Cys207 carries the post-translational modification S-nitrosocysteine; transient; alternate. Residue Glu217 is the Proton acceptor of the active site. Lys259 functions as the Schiff-base intermediate with dihydroxyacetone-P in the catalytic mechanism. Substrate-binding positions include 301-303 (SGG) and Arg333.

Belongs to the class I fructose-bisphosphate aldolase family. In terms of assembly, homotetramer. S-glutathionylated at Cys-207. Post-translationally, S-nitrosylated at Cys-207. As to expression, highly expressed in flowers.

The protein localises to the cytoplasm. It localises to the cytosol. The enzyme catalyses beta-D-fructose 1,6-bisphosphate = D-glyceraldehyde 3-phosphate + dihydroxyacetone phosphate. Its pathway is carbohydrate degradation; glycolysis; D-glyceraldehyde 3-phosphate and glycerone phosphate from D-glucose: step 4/4. In terms of biological role, fructose-bisphosphate aldolase that plays a key role in glycolysis and gluconeogenesis. The polypeptide is Fructose-bisphosphate aldolase 4, cytosolic (Arabidopsis thaliana (Mouse-ear cress)).